Reading from the N-terminus, the 775-residue chain is Dipeptidyl peptidase 4 (775 aa).

Residues 1 to 15 (MKFLSLLLLVGVAQA) form the signal peptide. Residues asparagine 81, asparagine 111, and asparagine 219 are each glycosylated (N-linked (GlcNAc...) asparagine). Active-site charge relay system residues include serine 613, aspartate 690, and histidine 725. N-linked (GlcNAc...) asparagine glycosylation occurs at asparagine 731.

Belongs to the peptidase S9B family.

It localises to the secreted. The enzyme catalyses Release of an N-terminal dipeptide, Xaa-Yaa-|-Zaa-, from a polypeptide, preferentially when Yaa is Pro, provided Zaa is neither Pro nor hydroxyproline.. Its function is as follows. Extracellular dipeptidyl-peptidase which removes N-terminal dipeptides sequentially from polypeptides having unsubstituted N-termini provided that the penultimate residue is proline. Contributes to pathogenicity. In Arthroderma otae (strain ATCC MYA-4605 / CBS 113480) (Microsporum canis), this protein is Dipeptidyl peptidase 4 (DPP4).